The following is a 108-amino-acid chain: Small ribosomal subunit protein eS25 (108 aa).

A disordered region spans residues Met1–Lys36. The span at Lys22–Gly31 shows a compositional bias: basic residues.

This sequence belongs to the eukaryotic ribosomal protein eS25 family.

The chain is Small ribosomal subunit protein eS25 (RPS25) from Solanum lycopersicum (Tomato).